We begin with the raw amino-acid sequence, 319 residues long: CBBY-like protein (319 aa).

Residues 1–65 constitute a chloroplast transit peptide; that stretch reads MATVKISLSL…YRSSRSVGVT (65 aa). The active-site Nucleophile is Asp82. Positions 82 and 84 each coordinate Mg(2+). Asp82 is a substrate binding site. Asp84 functions as the Proton donor in the catalytic mechanism. Substrate-binding positions include Glu91, 125 to 129, 158 to 161, and 198 to 204; these read GGKER, HKQK, and STSNEKA. Position 258 (Asp258) interacts with Mg(2+).

Belongs to the HAD-like hydrolase superfamily. DOG/GPP family. Requires Mg(2+) as cofactor.

The protein resides in the plastid. The protein localises to the chloroplast. The enzyme catalyses D-xylulose 1,5-bisphosphate + H2O = D-xylulose 5-phosphate + phosphate. Highly selective xylulose-1,5-bisphosphate (XuBP) phosphatase. Also shows activity towards ribulose-1,5-bisphosphate (RuBP) and fructose-1,6-bisphosphate (FBP), but not towards fructose-6-phosphate (F6P) or ribulose-5-phosphate (Ru5P). Degrades xylulose-1,5-bisphosphate, a potent inhibitor of rubisco produced by the rubisco itself. The chain is CBBY-like protein from Arabidopsis thaliana (Mouse-ear cress).